Consider the following 1229-residue polypeptide: DNA-directed RNA polymerase subunit beta (1229 aa).

The protein belongs to the RNA polymerase beta chain family. The RNAP catalytic core consists of 2 alpha, 1 beta, 1 beta' and 1 omega subunit. When a sigma factor is associated with the core the holoenzyme is formed, which can initiate transcription.

The catalysed reaction is RNA(n) + a ribonucleoside 5'-triphosphate = RNA(n+1) + diphosphate. In terms of biological role, DNA-dependent RNA polymerase catalyzes the transcription of DNA into RNA using the four ribonucleoside triphosphates as substrates. This is DNA-directed RNA polymerase subunit beta from Roseiflexus sp. (strain RS-1).